We begin with the raw amino-acid sequence, 348 residues long: 3-keto-steroid reductase (348 aa).

Residues leucine 18, threonine 41, and arginine 47 each coordinate NADP(+). Residues serine 180 and tyrosine 203 each act as proton donor in the active site. Residues tyrosine 203, lysine 207, and serine 238 each contribute to the NADP(+) site. The Lowers pKa of active site Tyr role is filled by lysine 207.

The protein belongs to the short-chain dehydrogenases/reductases (SDR) family. ERG27 subfamily.

The enzyme catalyses a 3beta-hydroxysteroid + NADP(+) = a 3-oxosteroid + NADPH + H(+). The protein operates within steroid biosynthesis; zymosterol biosynthesis; zymosterol from lanosterol: step 5/6. Functionally, responsible for the reduction of the keto group on the C-3 of sterols. The chain is 3-keto-steroid reductase (ERG27) from Candida glabrata (strain ATCC 2001 / BCRC 20586 / JCM 3761 / NBRC 0622 / NRRL Y-65 / CBS 138) (Yeast).